The sequence spans 1404 residues: DNA-directed RNA polymerase subunit beta' (1404 aa).

Positions 70, 72, 85, and 88 each coordinate Zn(2+). Mg(2+) contacts are provided by D460, D462, and D464. 4 residues coordinate Zn(2+): C814, C888, C895, and C898.

Belongs to the RNA polymerase beta' chain family. In terms of assembly, the RNAP catalytic core consists of 2 alpha, 1 beta, 1 beta' and 1 omega subunit. When a sigma factor is associated with the core the holoenzyme is formed, which can initiate transcription. It depends on Mg(2+) as a cofactor. Zn(2+) serves as cofactor.

It catalyses the reaction RNA(n) + a ribonucleoside 5'-triphosphate = RNA(n+1) + diphosphate. Functionally, DNA-dependent RNA polymerase catalyzes the transcription of DNA into RNA using the four ribonucleoside triphosphates as substrates. This Buchnera aphidicola subsp. Baizongia pistaciae (strain Bp) protein is DNA-directed RNA polymerase subunit beta'.